The chain runs to 214 residues: GTP cyclohydrolase 1 (214 aa).

Positions 101, 104, and 172 each coordinate Zn(2+).

The protein belongs to the GTP cyclohydrolase I family. Toroid-shaped homodecamer, composed of two pentamers of five dimers.

It catalyses the reaction GTP + H2O = 7,8-dihydroneopterin 3'-triphosphate + formate + H(+). Its pathway is cofactor biosynthesis; 7,8-dihydroneopterin triphosphate biosynthesis; 7,8-dihydroneopterin triphosphate from GTP: step 1/1. The polypeptide is GTP cyclohydrolase 1 (Gloeobacter violaceus (strain ATCC 29082 / PCC 7421)).